The chain runs to 77 residues: Translation initiation factor IF-1, chloroplastic (77 aa).

In terms of domain architecture, S1-like spans 1–72 (MRKQNLIEME…TKGRITYRLR (72 aa)).

The protein belongs to the IF-1 family. Component of the 30S ribosomal translation pre-initiation complex which assembles on the 30S ribosome in the order IF-2 and IF-3, IF-1 and N-formylmethionyl-tRNA(fMet); mRNA recruitment can occur at any time during PIC assembly.

It localises to the plastid. The protein localises to the chloroplast. Functionally, one of the essential components for the initiation of protein synthesis. Stabilizes the binding of IF-2 and IF-3 on the 30S subunit to which N-formylmethionyl-tRNA(fMet) subsequently binds. Helps modulate mRNA selection, yielding the 30S pre-initiation complex (PIC). Upon addition of the 50S ribosomal subunit IF-1, IF-2 and IF-3 are released leaving the mature 70S translation initiation complex. In Staurastrum punctulatum (Green alga), this protein is Translation initiation factor IF-1, chloroplastic.